We begin with the raw amino-acid sequence, 235 residues long: uncharacterized protein (235 aa).

2 helical membrane passes run 167 to 187 (AFKLAILVTPFVETLSWLNEL) and 190 to 210 (LFAYCPAELSLSLFFLCLLLW).

Its subcellular location is the membrane. This is an uncharacterized protein from Saccharomyces cerevisiae (strain ATCC 204508 / S288c) (Baker's yeast).